We begin with the raw amino-acid sequence, 31 residues long: Cyclotide vibi-G (31 aa).

The segment at residues 1–31 is a cross-link (cyclopeptide (Gly-Asn)); it reads GTFPCGESCVFIPCLTSAIGCSCKSKVCYKN. 3 disulfides stabilise this stretch: cysteine 5/cysteine 21, cysteine 9/cysteine 23, and cysteine 14/cysteine 28.

In terms of processing, this is a cyclic peptide.

Its function is as follows. Probably participates in a plant defense mechanism. Has cytotoxic activity, active against a human lymphoma cell line with an IC(50) of 0.96 uM. The chain is Cyclotide vibi-G from Viola biflora (Yellow wood violet).